The sequence spans 87 residues: Small ribosomal subunit protein uS15c (87 aa).

It belongs to the universal ribosomal protein uS15 family. In terms of assembly, part of the 30S ribosomal subunit.

Its subcellular location is the plastid. It localises to the chloroplast. The chain is Small ribosomal subunit protein uS15c (rps15) from Oenothera biennis (German evening primrose).